The sequence spans 96 residues: Co-chaperonin GroES (96 aa).

It belongs to the GroES chaperonin family. As to quaternary structure, heptamer of 7 subunits arranged in a ring. Interacts with the chaperonin GroEL.

The protein localises to the cytoplasm. Together with the chaperonin GroEL, plays an essential role in assisting protein folding. The GroEL-GroES system forms a nano-cage that allows encapsulation of the non-native substrate proteins and provides a physical environment optimized to promote and accelerate protein folding. GroES binds to the apical surface of the GroEL ring, thereby capping the opening of the GroEL channel. This Acidithiobacillus ferrooxidans (strain ATCC 23270 / DSM 14882 / CIP 104768 / NCIMB 8455) (Ferrobacillus ferrooxidans (strain ATCC 23270)) protein is Co-chaperonin GroES.